The primary structure comprises 513 residues: Maturase K (513 aa).

Belongs to the intron maturase 2 family. MatK subfamily.

It localises to the plastid. The protein localises to the chloroplast. In terms of biological role, usually encoded in the trnK tRNA gene intron. Probably assists in splicing its own and other chloroplast group II introns. The chain is Maturase K from Phragmites australis (Common reed).